We begin with the raw amino-acid sequence, 84 residues long: ATPase-stabilizing factor 15 kDa protein (84 aa).

Residues 1-18 (MTRTNKWTEREGKADPKY) are compositionally biased toward basic and acidic residues. The interval 1-84 (MTRTNKWTER…EQKFENVQKE (84 aa)) is disordered. Phosphoserine is present on residues serine 28 and serine 69. Residues 74–84 (HEQKFENVQKE) show a composition bias toward basic and acidic residues.

This sequence belongs to the STF2 family.

Its subcellular location is the mitochondrion. The protein resides in the cytoplasm. Its function is as follows. Found to stabilize, together with STF1, a complex of intrinsic ATPase inhibitor INH1 and proton-translocating ATPase (F(1)F(0)-ATPase) in mitochondrial membranes. Binds to the F0 part and may function to hold the ATPase inhibitor or STF1 on the F1 subunit. Also acts as a hydrophilins that enhances dry stress tolerance. Cell viability after desiccation and rehydration is due to the antioxidant capacity of the protein, which reduces the number of apoptotic cells during stress conditions by minimising the accumulation of reactive oxygen species (ROS) in the cells. This chain is ATPase-stabilizing factor 15 kDa protein (STF2), found in Saccharomyces cerevisiae (strain ATCC 204508 / S288c) (Baker's yeast).